Reading from the N-terminus, the 352-residue chain is tRNA-specific 2-thiouridylase MnmA (352 aa).

ATP-binding positions include 6–13 (AMSGGVDS) and L32. C101 (nucleophile) is an active-site residue. Cysteines 101 and 194 form a disulfide. G125 contributes to the ATP binding site. Residues 144–146 (KDQ) form an interaction with tRNA region. Catalysis depends on C194, which acts as the Cysteine persulfide intermediate.

The protein belongs to the MnmA/TRMU family.

Its subcellular location is the cytoplasm. It carries out the reaction S-sulfanyl-L-cysteinyl-[protein] + uridine(34) in tRNA + AH2 + ATP = 2-thiouridine(34) in tRNA + L-cysteinyl-[protein] + A + AMP + diphosphate + H(+). Its function is as follows. Catalyzes the 2-thiolation of uridine at the wobble position (U34) of tRNA, leading to the formation of s(2)U34. This Frankia casuarinae (strain DSM 45818 / CECT 9043 / HFP020203 / CcI3) protein is tRNA-specific 2-thiouridylase MnmA.